We begin with the raw amino-acid sequence, 255 residues long: MSLLSAHLEQISISCQGIDSLPFPPPKIFTNALLSNPDITSLIRDTEAHERALFSVPPPPPRQTTLTAEQQQQQKPSNRRQTVFNVTGGEIRTGGVGSASTARRNTAVAAVLGGDLHAQIMRGTRARPGQQPGSGDIDMEVLLRGVEKLCAVYPLPGALERVPVIRQKWQAQSNTLAYYEAKIAEQQEMLDRIAQERMMNDGDGDVEMEDVEEVGMTEEDLRREEEEVRELDKRKRDLQARLRALDADLGGLLNV.

A disordered region spans residues 53 to 81 (LFSVPPPPPRQTTLTAEQQQQQKPSNRRQ). Residues 63-81 (QTTLTAEQQQQQKPSNRRQ) are compositionally biased toward polar residues. A coiled-coil region spans residues 176–248 (LAYYEAKIAE…QARLRALDAD (73 aa)).

It belongs to the DASH complex SPC34 family. In terms of assembly, component of the DASH complex consisting of ASK1, DAD1, DAD2, DAD3, DAD4, DAM1, DUO1, HSK3, SPC19 and SPC34, with a stoichiometry of one copy of each subunit per complex. Multiple DASH complexes oligomerize to form a ring that encircles spindle microtubules and organizes the rod-like NDC80 complexes of the outer kinetochore of the outer kinetochore. DASH complex oligomerization strengthens microtubule attachments. On cytoplasmic microtubules, DASH complexes appear to form patches instead of rings.

The protein resides in the nucleus. It localises to the cytoplasm. It is found in the cytoskeleton. The protein localises to the spindle. Its subcellular location is the chromosome. The protein resides in the centromere. It localises to the kinetochore. In terms of biological role, component of the DASH complex that connects microtubules with kinetochores and couples microtubule depolymerisation to chromosome movement; it is involved in retrieving kinetochores to the spindle poles before their re-orientation on the spindle in early mitosis and allows microtubule depolymerization to pull chromosomes apart and resist detachment during anaphase. Kinetochores, consisting of a centromere-associated inner segment and a microtubule-contacting outer segment, play a crucial role in chromosome segregation by mediating the physical connection between centromeric DNA and microtubules. Kinetochores also serve as an input point for the spindle assembly checkpoint, which delays anaphase until all chromosomes have bioriented on the mitotic spindle. The polypeptide is DASH complex subunit SPC34 (Chaetomium thermophilum (strain DSM 1495 / CBS 144.50 / IMI 039719) (Thermochaetoides thermophila)).